The sequence spans 87 residues: MERKLALLLILGMVTLASCGLREKHVQKLVALIPNDQLRSILKAVVHKVAKTQFGCPAYEGYCNDHCNDIERKDGECHGFKCKCAKD.

An N-terminal signal peptide occupies residues 1–19; it reads MERKLALLLILGMVTLASC. Residues 53–87 form the BetaSPN-type CS-alpha/beta domain; that stretch reads QFGCPAYEGYCNDHCNDIERKDGECHGFKCKCAKD. 3 disulfide bridges follow: Cys56-Cys77, Cys63-Cys82, and Cys67-Cys84.

It belongs to the long chain scorpion toxin family. Class 1 subfamily. In terms of tissue distribution, expressed by the venom gland.

It is found in the secreted. Specifically blocks voltage-gated potassium channels Kv4.2/KCND2. When measured at the peak current, the blocking effect of this toxin is about 65% and shows an IC(50)=652 nM. However, when measured at a later moment of the depolarising test pulse (500 ms), a 100% block of the current is observed with an IC(50)=313 nM. This may indicate a preference of the toxin for binding the inactivated state of the channel. The inhibition is completely reversible. In vivo, intraplantar injection into rat paw induces overt nociception (licking and lifting behaviors) and decreases the mechanical nociceptive threshold (hyperalgesia). Furthermore, the hyperalgesia is prolonged when intrathecal injections are performed. In terms of biological role, induces discomfort and anxiety in mice, as it moderately diminishes locomotion (but has no effect on rearing behavior). Does not cause hemolysis, mast cell degranulation, LDH release, and does not have antimicrobial activity. Does not cause edema and pain. Its function is as follows. Does not induce hemolytic activity, lactate dehydrogenase (LDH) release from mast cells, mast cell degranulation, and antimicrobial effects. In vivo, injection into mice causes moderate edema formation, but induces very weak or no change in nociceptive sensibility. It also reduces mice locomotion, suggesting an increase in anxiety, but causes no alteration in rearing (standing on hind limbs). The polypeptide is Potassium channel toxin TsTXK-beta/Cryptide TyPep-16 (Tityus serrulatus (Brazilian scorpion)).